A 93-amino-acid chain; its full sequence is MPEPAKSAPAPKKGSKKAVTKTQKKGDKKRXXXXXXXXXXXXXXXXXXXXXXXXXXXXXXXXMNSFVNDIFERIAGEASRLAHYNKRSTITSR.

Residues 1–12 (MPEPAKSAPAPK) are compositionally biased toward low complexity. A disordered region spans residues 1-31 (MPEPAKSAPAPKKGSKKAVTKTQKKGDKKRX). An N6-acetyllysine mark is found at Lys6 and Lys13. The span at 13–28 (KGSKKAVTKTQKKGDK) shows a compositional bias: basic residues. Ser15 is modified (phosphoserine). Lys16 and Lys21 each carry N6-acetyllysine.

The protein belongs to the histone H2B family. In terms of assembly, the nucleosome is a histone octamer containing two molecules each of H2A, H2B, H3 and H4 assembled in one H3-H4 heterotetramer and two H2A-H2B heterodimers. The octamer wraps approximately 147 bp of DNA. Post-translationally, monoubiquitination at the C-terminal Lys gives a specific tag for epigenetic transcriptional activation and is also prerequisite for histone H3 'Lys-4' and 'Lys-79' methylation. In terms of processing, phosphorylated on Ser-15 during apoptosis; which facilitates apoptotic chromatin condensation.

It is found in the nucleus. It localises to the chromosome. Core component of nucleosome. Nucleosomes wrap and compact DNA into chromatin, limiting DNA accessibility to the cellular machineries which require DNA as a template. Histones thereby play a central role in transcription regulation, DNA repair, DNA replication and chromosomal stability. DNA accessibility is regulated via a complex set of post-translational modifications of histones, also called histone code, and nucleosome remodeling. The chain is Histone H2B from Crocodylus niloticus (Nile crocodile).